The primary structure comprises 32 residues: Yop proteins translocation protein A (32 aa).

This is Yop proteins translocation protein A (yscA) from Yersinia enterocolitica serotype O:8 / biotype 1B (strain NCTC 13174 / 8081).